A 130-amino-acid chain; its full sequence is UPF0251 protein MmarC7_1642 (130 aa).

This sequence belongs to the UPF0251 family.

The protein is UPF0251 protein MmarC7_1642 of Methanococcus maripaludis (strain C7 / ATCC BAA-1331).